We begin with the raw amino-acid sequence, 346 residues long: Methylthioribose-1-phosphate isomerase (346 aa).

Substrate contacts are provided by residues 46-48 (RGA), arginine 89, and glutamine 196. Aspartate 237 serves as the catalytic Proton donor. 247–248 (NK) lines the substrate pocket.

Belongs to the eIF-2B alpha/beta/delta subunits family. MtnA subfamily.

The enzyme catalyses 5-(methylsulfanyl)-alpha-D-ribose 1-phosphate = 5-(methylsulfanyl)-D-ribulose 1-phosphate. Its pathway is amino-acid biosynthesis; L-methionine biosynthesis via salvage pathway; L-methionine from S-methyl-5-thio-alpha-D-ribose 1-phosphate: step 1/6. In terms of biological role, catalyzes the interconversion of methylthioribose-1-phosphate (MTR-1-P) into methylthioribulose-1-phosphate (MTRu-1-P). This chain is Methylthioribose-1-phosphate isomerase, found in Geobacter sulfurreducens (strain ATCC 51573 / DSM 12127 / PCA).